Here is a 910-residue protein sequence, read N- to C-terminus: Leucine--tRNA ligase (910 aa).

The 'HIGH' region motif lies at Pro50–His60. A 'KMSKS' region motif is present at residues Lys611–Ser615. Lys614 is an ATP binding site.

Belongs to the class-I aminoacyl-tRNA synthetase family.

The protein resides in the cytoplasm. The enzyme catalyses tRNA(Leu) + L-leucine + ATP = L-leucyl-tRNA(Leu) + AMP + diphosphate. The protein is Leucine--tRNA ligase of Thermoplasma acidophilum (strain ATCC 25905 / DSM 1728 / JCM 9062 / NBRC 15155 / AMRC-C165).